The chain runs to 1020 residues: Contactin-1 (1020 aa).

A signal peptide spans 1 to 20; that stretch reads MKMPLLVSHLLLISLTSCLG. Ig-like C2-type domains lie at 41-131, 137-223, 241-326, 331-407, 413-500, and 504-603; these read PIFE…ATLS, PFPP…KSVF, PADI…ARIY, PEWV…AELK, PTFE…GTLV, and PTRI…LVVR. Intrachain disulfides connect Cys-65–Cys-114 and Cys-158–Cys-211. N-linked (GlcNAc...) asparagine glycosylation is found at Asn-208 and Asn-258. The cysteines at positions 263 and 310 are disulfide-linked. Asn-338 is a glycosylation site (N-linked (GlcNAc...) asparagine). Cystine bridges form between Cys-352–Cys-391 and Cys-436–Cys-484. Residues Asn-457, Asn-473, Asn-494, and Asn-521 are each glycosylated (N-linked (GlcNAc...) asparagine). Cysteines 526 and 585 form a disulfide. A glycan (N-linked (GlcNAc...) asparagine) is linked at Asn-593. Fibronectin type-III domains are found at residues 608-706, 711-808, 813-908, and 909-1002; these read PPGG…TDGA, APSD…SAQD, APTE…APPS, and QPPR…TLSS. The disordered stretch occupies residues 695-719; the sequence is SIPSNRIKTDGAAPNVAPSDVGGGG. N-linked (GlcNAc...) asparagine glycosylation occurs at Asn-935. Ser-1001 carries GPI-anchor amidated serine lipidation. Positions 1002–1020 are cleaved as a propeptide — removed in mature form; it reads SSLLSLLLPSLGFLVYSEF.

This sequence belongs to the immunoglobulin superfamily. Contactin family. In terms of assembly, monomer. Interacts with CNTNAP1 in cis form. Binds to the carbonic-anhydrase like domain of PTPRZ1. Interacts with NOTCH1 and TNR. Detected in a complex with NRCAM and PTPRB. Interacts with TASOR. In terms of tissue distribution, expressed in the ovary and in Sertoli cells of the testis.

The protein resides in the cell membrane. Contactins mediate cell surface interactions during nervous system development. Involved in the formation of paranodal axo-glial junctions in myelinated peripheral nerves and in the signaling between axons and myelinating glial cells via its association with CNTNAP1. Participates in oligodendrocytes generation by acting as a ligand of NOTCH1. Its association with NOTCH1 promotes NOTCH1 activation through the released notch intracellular domain (NICD) and subsequent translocation to the nucleus. Interaction with TNR induces a repulsion of neurons and an inhibition of neurite outgrowth. This is Contactin-1 (Cntn1) from Mus musculus (Mouse).